The primary structure comprises 319 residues: MTEPLRIVFAGTPEFAAEHLKALLDSPYQIVAVYTQPDRPAGRGQKLMPSPVKQLALENDIPVLQPPTLRNAEAQAELAALKPDLMVVVAYGLILPQAVLDIPRLGCINSHASLLPRWRGAAPIQRAVQAGDAQSGVTVMRMEAGLDTGPMLLKVSTPISAEDTGGSLHDRLAEMGPPAVLQAIEGLAAGTLEGEVQDDSLATYAHKLNKDEARIDWSRPAVELERLVRAFNPWPICHSSLNGEALKVLAATLAEGKGAPGEILGASKDGLIVACGEQALCLTRLQLPGGKALNFSDLFNSRREKFAIGTVLGQTADAQ.

Residue 113-116 (SLLP) participates in (6S)-5,6,7,8-tetrahydrofolate binding.

Belongs to the Fmt family.

It carries out the reaction L-methionyl-tRNA(fMet) + (6R)-10-formyltetrahydrofolate = N-formyl-L-methionyl-tRNA(fMet) + (6S)-5,6,7,8-tetrahydrofolate + H(+). Attaches a formyl group to the free amino group of methionyl-tRNA(fMet). The formyl group appears to play a dual role in the initiator identity of N-formylmethionyl-tRNA by promoting its recognition by IF2 and preventing the misappropriation of this tRNA by the elongation apparatus. This Pseudomonas fluorescens (strain ATCC BAA-477 / NRRL B-23932 / Pf-5) protein is Methionyl-tRNA formyltransferase.